The sequence spans 380 residues: Variant-surface-glycoprotein phospholipase C (380 aa).

Positions 31–205 (ITQVCFVGSH…SRRRIFLVVG (175 aa)) constitute a PI-PLC X-box domain.

In terms of assembly, monomer.

It is found in the membrane. The catalysed reaction is a 6-(alpha-D-glucosaminyl)-1-(1,2-diacyl-sn-glycero-3-phospho)-1D-myo-inositol = 6-(alpha-D-glucosaminyl)-1D-myo-inositol 1,2-cyclic phosphate + a 1,2-diacyl-sn-glycerol. In terms of biological role, by hydrolysis of the attached glycolipid, releases soluble variant surface glycoprotein containing phosphoinositol from the cell wall of T.brucei after cell lysis. It also cleaves similar membrane anchors on some mammalian proteins. VSG lipase may play a role in processes such as parasite differentiation or antigenic variation. The sequence is that of Variant-surface-glycoprotein phospholipase C from Trypanosoma cruzi.